We begin with the raw amino-acid sequence, 411 residues long: Protein DDI1 homolog 2 (411 aa).

Positions 1–81 (MLLTVFCAPR…LVLRQAERLR (81 aa)) constitute a Ubiquitin-like domain. The segment at 82–144 (APPQPTVPGL…SGVSPQGLDN (63 aa)) is disordered. Residues 108 to 121 (QNRNRPQQAQRPST) show a composition bias toward low complexity. Asp262 is a catalytic residue. Residues 387–406 (DEIADRELAEAIQRSVQDSG) carry the Ubiquitin-binding motif.

It belongs to the DDI1 family. In terms of assembly, homodimer.

The protein localises to the cytoplasm. Its subcellular location is the cytosol. It is found in the chromosome. Its function is as follows. Aspartic protease that mediates the cleavage of NFE2L1/NRF1 at 'Leu-104', thereby promoting release of NFE2L1/NRF1 from the endoplasmic reticulum membrane. Ubiquitination of NFE2L1/NRF1 is a prerequisite for cleavage, suggesting that DDI2 specifically recognizes and binds ubiquitinated NFE2L1/NRF1. Seems to act as a proteasomal shuttle which links the proteasome and replication fork proteins like RTF2. Required for cellular survival following replication stress. This is Protein DDI1 homolog 2 (ddi2) from Danio rerio (Zebrafish).